A 276-amino-acid chain; its full sequence is AT-hook motif nuclear-localized protein 17 (276 aa).

Over residues 1-10 the composition is skewed to basic and acidic residues; that stretch reads MKGEYREQKS. 2 disordered regions span residues 1–80 and 212–248; these read MKGE…RDTD and AEEE…SGGE. Low complexity-rich tracts occupy residues 20-31 and 40-49; these read HQQQQQQQQQQH and SSTVTPTVDD. The segment at residues 56–68 is a DNA-binding region (a.T hook); the sequence is RRPRGRPPGSKNK. Residues 80 to 230 enclose the PPC domain; it reads DPPMSPYILE…GTGEREGQSP (151 aa). The span at 212–227 shows a compositional bias: basic and acidic residues; the sequence is AEEEQKHSAGTGEREG. Residues 233-248 are compositionally biased toward gly residues; it reads SGGGEESGQMAGSGGE.

The protein resides in the nucleus. Transcription factor that specifically binds AT-rich DNA sequences related to the nuclear matrix attachment regions (MARs). The protein is AT-hook motif nuclear-localized protein 17 of Arabidopsis thaliana (Mouse-ear cress).